Consider the following 422-residue polypeptide: Beta-1,3-galactosyltransferase 2 (422 aa).

Residues 1–24 lie on the Cytoplasmic side of the membrane; that stretch reads MLQWRRRHCCFAKMTWNAKRSLFR. The helical; Signal-anchor for type II membrane protein transmembrane segment at 25–45 threads the bilayer; the sequence is THLIGVLSLVFLFAMFLFFNH. Topologically, residues 46-422 are lumenal; that stretch reads HDWLPGRAGF…AGRYRHRKLH (377 aa). N-linked (GlcNAc...) asparagine glycosylation is found at Asn-75, Asn-100, Asn-119, Asn-176, and Asn-226. The tract at residues 90-110 is disordered; the sequence is TLRPQTATNSNNTDLSPQGVT.

The protein belongs to the glycosyltransferase 31 family. Mn(2+) is required as a cofactor. As to expression, detected in heart and brain.

The protein resides in the golgi apparatus membrane. It catalyses the reaction an N-acetyl-beta-D-glucosaminyl derivative + UDP-alpha-D-galactose = a beta-D-galactosyl-(1-&gt;3)-N-acetyl-beta-D-glucosaminyl derivative + UDP + H(+). It carries out the reaction a beta-D-GlcNAc-(1-&gt;3)-beta-D-Gal-(1-&gt;4)-beta-D-Glc-(1&lt;-&gt;1)-Cer(d18:1(4E)) + UDP-alpha-D-galactose = a beta-D-Gal-(1-&gt;3)-beta-D-GlcNAc-(1-&gt;3)-beta-D-Gal-(1-&gt;4)-beta-D-Glc-(1&lt;-&gt;1')-Cer(d18:1(4E)) + UDP + H(+). The catalysed reaction is a neolactoside IV(3)-beta-GlcNAc-nLc4Cer(d18:1(4E)) + UDP-alpha-D-galactose = a neolactoside IV(3)-beta-[Gal-beta-(1-&gt;3)-GlcNAc]-nLc4Cer(d18:1(4E)) + UDP + H(+). The protein operates within protein modification; protein glycosylation. Its function is as follows. Beta-1,3-galactosyltransferase that transfers galactose from UDP-galactose to substrates with a terminal beta-N-acetylglucosamine (beta-GlcNAc) residue. Can also utilize substrates with a terminal galactose residue, albeit with lower efficiency. Involved in the biosynthesis of the carbohydrate moieties of glycolipids and glycoproteins. Inactive towards substrates with terminal alpha-N-acetylglucosamine (alpha-GlcNAc) or alpha-N-acetylgalactosamine (alpha-GalNAc) residues. In Homo sapiens (Human), this protein is Beta-1,3-galactosyltransferase 2.